The following is a 397-amino-acid chain: Enoyl-[acyl-carrier-protein] reductase [NADH] (397 aa).

NAD(+) is bound by residues 48–53 (GASTGY), 74–75 (FE), 111–112 (DA), and 139–140 (LA). Tyr224 contributes to the substrate binding site. Catalysis depends on Tyr234, which acts as the Proton donor. NAD(+) is bound by residues Lys243 and 272–274 (VVT).

This sequence belongs to the TER reductase family. In terms of assembly, monomer.

It catalyses the reaction a 2,3-saturated acyl-[ACP] + NAD(+) = a (2E)-enoyl-[ACP] + NADH + H(+). It functions in the pathway lipid metabolism; fatty acid biosynthesis. Functionally, involved in the final reduction of the elongation cycle of fatty acid synthesis (FAS II). Catalyzes the reduction of a carbon-carbon double bond in an enoyl moiety that is covalently linked to an acyl carrier protein (ACP). This chain is Enoyl-[acyl-carrier-protein] reductase [NADH], found in Pseudomonas fluorescens (strain SBW25).